A 101-amino-acid chain; its full sequence is Small ribosomal subunit protein uS10 (101 aa).

The protein belongs to the universal ribosomal protein uS10 family. Part of the 30S ribosomal subunit.

Involved in the binding of tRNA to the ribosomes. This Methanocaldococcus jannaschii (strain ATCC 43067 / DSM 2661 / JAL-1 / JCM 10045 / NBRC 100440) (Methanococcus jannaschii) protein is Small ribosomal subunit protein uS10.